A 234-amino-acid chain; its full sequence is Thymidylate kinase (234 aa).

21-28 (GGEGTGKS) serves as a coordination point for ATP.

Belongs to the thymidylate kinase family.

The catalysed reaction is dTMP + ATP = dTDP + ADP. Functionally, phosphorylation of dTMP to form dTDP in both de novo and salvage pathways of dTTP synthesis. This chain is Thymidylate kinase, found in Rhizobium meliloti (strain 1021) (Ensifer meliloti).